We begin with the raw amino-acid sequence, 344 residues long: Histone-lysine N-methyltransferase, H3 lysine-9 specific KMT1 (344 aa).

One can recognise a Pre-SET domain in the interval 79–174 (SGCSCAKDSE…DCPNRVVERG (96 aa)). Zn(2+) is bound by residues Cys-81, Cys-83, Cys-89, Cys-94, Cys-96, Cys-156, Cys-160, Cys-162, Cys-166, and Cys-272. Residues 177–312 (IPLEIFRTPD…EGEELTFDYV (136 aa)) enclose the SET domain. Tyr-311 is an S-adenosyl-L-methionine binding site. Positions 328–344 (HMTRCLCGSKKCRKFLW) constitute a Post-SET domain. Zn(2+)-binding residues include Cys-332, Cys-334, and Cys-339.

The protein belongs to the class V-like SAM-binding methyltransferase superfamily.

The protein resides in the chromosome. It catalyses the reaction L-lysyl(9)-[histone H3] + 3 S-adenosyl-L-methionine = N(6),N(6),N(6)-trimethyl-L-lysyl(9)-[histone H3] + 3 S-adenosyl-L-homocysteine + 3 H(+). Functionally, histone methyltransferase that specifically trimethylates histone H3 to form H3K9me3. H3K9me3 marks chromatin regions for DNA methylation. Plays a key role in the regulation of the biosynthesis of the gamma-pyrones fusapyrone (FPY) and deoxyfusapyrone (dFPY). The polypeptide is Histone-lysine N-methyltransferase, H3 lysine-9 specific KMT1 (Fusarium mangiferae (Mango malformation disease fungus)).